The following is a 448-amino-acid chain: Protein ECM7 (448 aa).

The Cytoplasmic portion of the chain corresponds to 1-28 (MVMSRIRDTIARPFQNLTALEKVVQWLR). A helical transmembrane segment spans residues 29 to 49 (LGTTLLIISFGLALTVGPLSS). At 50–204 (PRTLYMSRLD…MRSLKHKKAN (155 aa)) the chain is on the extracellular side. The chain crosses the membrane as a helical span at residues 205-225 (VLHLLYAVISFQVCMLFFMIW). The Cytoplasmic portion of the chain corresponds to 226–246 (YYYIKGRFMNALKERALVHIN). The helical transmembrane segment at 247–267 (SLLSLVVFIGGLISSISLAWV) threads the bilayer. Over 268–287 (NYTIQSRINTELEAFGFSYH) the chain is Extracellular. Residues 288-308 (LGVTWFALLWCFAGLISVSCL) traverse the membrane as a helical segment. The Cytoplasmic portion of the chain corresponds to 309–448 (AWSGLEWCIS…VIKPSSALQF (140 aa)). Polar residues-rich tracts occupy residues 351-363 (YSQRYPQRQSTSG) and 383-406 (VDLNSENDANTSLDHGNPTANISN). 2 disordered regions span residues 351–411 (YSQR…GKHE) and 427–448 (RSSNDSEESMQRVIKPSSALQF).

The protein resides in the membrane. In terms of biological role, may be involved in cell wall organization and biogenesis. The chain is Protein ECM7 (ECM7) from Saccharomyces cerevisiae (strain ATCC 204508 / S288c) (Baker's yeast).